We begin with the raw amino-acid sequence, 387 residues long: UDP-N-acetylglucosamine--N-acetylmuramyl-(pentapeptide) pyrophosphoryl-undecaprenol N-acetylglucosamine transferase (387 aa).

Residues 14–16 (TGG), Asn-124, Arg-167, Ser-195, and Gln-296 each bind UDP-N-acetyl-alpha-D-glucosamine. Residues 366–387 (LPQQNSIEEDSTFEKNQEGAVA) form a disordered region. Residues 377 to 387 (TFEKNQEGAVA) show a composition bias toward basic and acidic residues.

Belongs to the glycosyltransferase 28 family. MurG subfamily.

Its subcellular location is the cell inner membrane. It catalyses the reaction di-trans,octa-cis-undecaprenyl diphospho-N-acetyl-alpha-D-muramoyl-L-alanyl-D-glutamyl-meso-2,6-diaminopimeloyl-D-alanyl-D-alanine + UDP-N-acetyl-alpha-D-glucosamine = di-trans,octa-cis-undecaprenyl diphospho-[N-acetyl-alpha-D-glucosaminyl-(1-&gt;4)]-N-acetyl-alpha-D-muramoyl-L-alanyl-D-glutamyl-meso-2,6-diaminopimeloyl-D-alanyl-D-alanine + UDP + H(+). It functions in the pathway cell wall biogenesis; peptidoglycan biosynthesis. Its function is as follows. Cell wall formation. Catalyzes the transfer of a GlcNAc subunit on undecaprenyl-pyrophosphoryl-MurNAc-pentapeptide (lipid intermediate I) to form undecaprenyl-pyrophosphoryl-MurNAc-(pentapeptide)GlcNAc (lipid intermediate II). The protein is UDP-N-acetylglucosamine--N-acetylmuramyl-(pentapeptide) pyrophosphoryl-undecaprenol N-acetylglucosamine transferase of Zymomonas mobilis subsp. mobilis (strain ATCC 31821 / ZM4 / CP4).